Consider the following 235-residue polypeptide: Segregation and condensation protein A (235 aa).

The protein belongs to the ScpA family. Component of a cohesin-like complex composed of ScpA, ScpB and the Smc homodimer, in which ScpA and ScpB bind to the head domain of Smc. The presence of the three proteins is required for the association of the complex with DNA.

It is found in the cytoplasm. In terms of biological role, participates in chromosomal partition during cell division. May act via the formation of a condensin-like complex containing Smc and ScpB that pull DNA away from mid-cell into both cell halves. The protein is Segregation and condensation protein A of Streptococcus agalactiae serotype III (strain NEM316).